The following is a 310-amino-acid chain: MRNSLYKKNIISINDLQRNELELVLNKSAMLKRTPQPNLLKNKVIASCFFEASTRTRLSFETAIYRLGASIVGFSDGNNISLEKKGETLTDTISVISSYVDAIIIRHPQEGSARLAAEFSNKKPIFNAGDGANQHPTQTLLDLFTIQETQNRLTQLNIAIVGDLKYGRTVHSLTQALAKFKHNKFYFISPDALKMPNYINNMLDKKEIYWKRHNNIEEIISEIDILYMTRIQKERLDSTEYANAKSKFVLRAAILKNARNNMKILHPLPRIDEIDRDVDYTPYAWYFKQAANGIYARQAILSLVLIEKHL.

Positions 55 and 56 each coordinate carbamoyl phosphate. Position 85 (Lys85) interacts with L-aspartate. 3 residues coordinate carbamoyl phosphate: Arg106, His135, and Gln138. Residues Arg168 and Arg230 each coordinate L-aspartate. Residues Leu268 and Pro269 each contribute to the carbamoyl phosphate site.

Belongs to the aspartate/ornithine carbamoyltransferase superfamily. ATCase family. In terms of assembly, heterododecamer (2C3:3R2) of six catalytic PyrB chains organized as two trimers (C3), and six regulatory PyrI chains organized as three dimers (R2).

It catalyses the reaction carbamoyl phosphate + L-aspartate = N-carbamoyl-L-aspartate + phosphate + H(+). It participates in pyrimidine metabolism; UMP biosynthesis via de novo pathway; (S)-dihydroorotate from bicarbonate: step 2/3. Catalyzes the condensation of carbamoyl phosphate and aspartate to form carbamoyl aspartate and inorganic phosphate, the committed step in the de novo pyrimidine nucleotide biosynthesis pathway. This Buchnera aphidicola subsp. Acyrthosiphon pisum (strain 5A) protein is Aspartate carbamoyltransferase catalytic subunit.